The primary structure comprises 293 residues: Ribosomal protein L11 methyltransferase (293 aa).

Residues T145, G166, D188, and N230 each contribute to the S-adenosyl-L-methionine site.

It belongs to the methyltransferase superfamily. PrmA family.

It localises to the cytoplasm. It catalyses the reaction L-lysyl-[protein] + 3 S-adenosyl-L-methionine = N(6),N(6),N(6)-trimethyl-L-lysyl-[protein] + 3 S-adenosyl-L-homocysteine + 3 H(+). In terms of biological role, methylates ribosomal protein L11. This Shewanella baltica (strain OS155 / ATCC BAA-1091) protein is Ribosomal protein L11 methyltransferase.